A 215-amino-acid chain; its full sequence is Adenylate kinase (215 aa).

ATP is bound at residue 10-15 (GAGKGT). Residues 30–59 (STGDILRENVKNETELGKKAKEYMDKGLLV) are NMP. AMP contacts are provided by residues T31, R36, 57-59 (LLV), 85-88 (GFPR), and Q92. An LID region spans residues 126–163 (GRRICKNCGASFHVIYRPPQKEGVCDVCGGELYQREDD). R127 is an ATP binding site. Residues C130 and C133 each contribute to the Zn(2+) site. Residue 136–137 (SF) participates in ATP binding. Positions 150 and 153 each coordinate Zn(2+). AMP contacts are provided by R160 and R171. Q198 lines the ATP pocket.

The protein belongs to the adenylate kinase family. As to quaternary structure, monomer.

Its subcellular location is the cytoplasm. The enzyme catalyses AMP + ATP = 2 ADP. It functions in the pathway purine metabolism; AMP biosynthesis via salvage pathway; AMP from ADP: step 1/1. Its function is as follows. Catalyzes the reversible transfer of the terminal phosphate group between ATP and AMP. Plays an important role in cellular energy homeostasis and in adenine nucleotide metabolism. This is Adenylate kinase from Caldicellulosiruptor bescii (strain ATCC BAA-1888 / DSM 6725 / KCTC 15123 / Z-1320) (Anaerocellum thermophilum).